The chain runs to 689 residues: Acyl-coenzyme A oxidase 1 (689 aa).

Residues T149 and G188 each contribute to the FAD site. E444 acts as the Proton acceptor in catalysis.

It belongs to the acyl-CoA oxidase family. Heteropentamer composed of five different subunits. FAD is required as a cofactor.

Its subcellular location is the peroxisome. It carries out the reaction a 2,3-saturated acyl-CoA + O2 = a (2E)-enoyl-CoA + H2O2. Its pathway is lipid metabolism; peroxisomal fatty acid beta-oxidation. The polypeptide is Acyl-coenzyme A oxidase 1 (POX1) (Yarrowia lipolytica (strain CLIB 122 / E 150) (Yeast)).